Here is a 245-residue protein sequence, read N- to C-terminus: MDIAPEREDSVDMPARRRWFEDRRVLKRIVLAVLIVLILPYALIVFYLLPFIHPVSTLMLRDLVLLRGYDRQWVSLDNIAPVVVQSVMMSEDGQYCFHGGVDWAEMRMLVEDTLKGQATRGGSTIPMQTAKNLFLWNGRSFVRKALELPLAVTTDFVLSKRRLMEIYLNIAEWGPGIYGIEAAARHHFKVPASKLTRRQASLLAVSLPNPIDRNAGKPGRGLRRLAGVIERRAQGSGDYIKCIYD.

The chain crosses the membrane as a helical span at residues 29–49 (IVLAVLIVLILPYALIVFYLL).

It belongs to the glycosyltransferase 51 family.

The protein resides in the cell inner membrane. It carries out the reaction [GlcNAc-(1-&gt;4)-Mur2Ac(oyl-L-Ala-gamma-D-Glu-L-Lys-D-Ala-D-Ala)](n)-di-trans,octa-cis-undecaprenyl diphosphate + beta-D-GlcNAc-(1-&gt;4)-Mur2Ac(oyl-L-Ala-gamma-D-Glu-L-Lys-D-Ala-D-Ala)-di-trans,octa-cis-undecaprenyl diphosphate = [GlcNAc-(1-&gt;4)-Mur2Ac(oyl-L-Ala-gamma-D-Glu-L-Lys-D-Ala-D-Ala)](n+1)-di-trans,octa-cis-undecaprenyl diphosphate + di-trans,octa-cis-undecaprenyl diphosphate + H(+). It functions in the pathway cell wall biogenesis; peptidoglycan biosynthesis. Functionally, peptidoglycan polymerase that catalyzes glycan chain elongation from lipid-linked precursors. The chain is Biosynthetic peptidoglycan transglycosylase from Rhizobium johnstonii (strain DSM 114642 / LMG 32736 / 3841) (Rhizobium leguminosarum bv. viciae).